The chain runs to 139 residues: 3-hydroxyacyl-[acyl-carrier-protein] dehydratase FabZ (139 aa).

Residue histidine 46 is part of the active site.

Belongs to the thioester dehydratase family. FabZ subfamily.

The protein localises to the cytoplasm. It catalyses the reaction a (3R)-hydroxyacyl-[ACP] = a (2E)-enoyl-[ACP] + H2O. In terms of biological role, involved in unsaturated fatty acids biosynthesis. Catalyzes the dehydration of short chain beta-hydroxyacyl-ACPs and long chain saturated and unsaturated beta-hydroxyacyl-ACPs. The protein is 3-hydroxyacyl-[acyl-carrier-protein] dehydratase FabZ of Streptococcus pyogenes serotype M3 (strain ATCC BAA-595 / MGAS315).